Consider the following 260-residue polypeptide: uncharacterized protein (260 aa).

The next 6 helical transmembrane spans lie at 39 to 59, 68 to 88, 111 to 131, 159 to 179, 193 to 213, and 214 to 234; these read IFYLLFIPLSKNFIYTDLIEA, IIVGIYLSYPIFLYQIWSFLI, FLGSCIGYYLLFPIAFTFFLG, LIFSLSICFQLPVLILFLFKI, FIYLFFFILAAILSPPDILSQ, and FILVIPLILFFEISLFCIKLI.

This sequence belongs to the TatC family.

It is found in the mitochondrion membrane. This is an uncharacterized protein from Reclinomonas americana.